Reading from the N-terminus, the 197-residue chain is Holliday junction branch migration complex subunit RuvA (197 aa).

Positions 1-62 are domain I; it reads MIEFVRGEVA…EDQEVLFGFR (62 aa). The domain II stretch occupies residues 63–141; the sequence is SRRERALFTK…ELAPDYIPSE (79 aa). Positions 141 to 145 are flexible linker; sequence EGLFA. A domain III region spans residues 146–197; it reads QGNAELNEACEALTALGYSEREVEKVKKALQGEVLSTDQYVKRALQLLLNVR.

The protein belongs to the RuvA family. In terms of assembly, homotetramer. Forms an RuvA(8)-RuvB(12)-Holliday junction (HJ) complex. HJ DNA is sandwiched between 2 RuvA tetramers; dsDNA enters through RuvA and exits via RuvB. An RuvB hexamer assembles on each DNA strand where it exits the tetramer. Each RuvB hexamer is contacted by two RuvA subunits (via domain III) on 2 adjacent RuvB subunits; this complex drives branch migration. In the full resolvosome a probable DNA-RuvA(4)-RuvB(12)-RuvC(2) complex forms which resolves the HJ.

It localises to the cytoplasm. Its function is as follows. The RuvA-RuvB-RuvC complex processes Holliday junction (HJ) DNA during genetic recombination and DNA repair, while the RuvA-RuvB complex plays an important role in the rescue of blocked DNA replication forks via replication fork reversal (RFR). RuvA specifically binds to HJ cruciform DNA, conferring on it an open structure. The RuvB hexamer acts as an ATP-dependent pump, pulling dsDNA into and through the RuvAB complex. HJ branch migration allows RuvC to scan DNA until it finds its consensus sequence, where it cleaves and resolves the cruciform DNA. The polypeptide is Holliday junction branch migration complex subunit RuvA (Exiguobacterium sibiricum (strain DSM 17290 / CCUG 55495 / CIP 109462 / JCM 13490 / 255-15)).